A 108-amino-acid polypeptide reads, in one-letter code: Ferredoxin, plant-type (108 aa).

Positions 5 to 96 (FEITVQPGGE…DLCIERYSKP (92 aa)) constitute a 2Fe-2S ferredoxin-type domain. [2Fe-2S] cluster contacts are provided by Cys40, Cys45, Cys48, and Cys80.

The protein belongs to the 2Fe2S plant-type ferredoxin family.

The protein operates within aromatic compound metabolism; catechol degradation. In terms of biological role, ferredoxins are iron-sulfur proteins that transfer electrons in a wide variety of metabolic reactions. The polypeptide is Ferredoxin, plant-type (nahT) (Pseudomonas putida (Arthrobacter siderocapsulatus)).